We begin with the raw amino-acid sequence, 191 residues long: Cytochrome c oxidase assembly protein CtaG (191 aa).

The Cytoplasmic segment spans residues 1-9 (MSLSPHQKT). The chain crosses the membrane as a helical; Signal-anchor for type II membrane protein span at residues 10–30 (AGGLVLVVAVMGAASFAAVPF). The Periplasmic segment spans residues 31–191 (YNWFCRVTGF…LAAESATDVN (161 aa)).

This sequence belongs to the COX11/CtaG family.

The protein resides in the cell inner membrane. Its function is as follows. Exerts its effect at some terminal stage of cytochrome c oxidase synthesis, probably by being involved in the insertion of the copper B into subunit I. The protein is Cytochrome c oxidase assembly protein CtaG of Cereibacter sphaeroides (strain ATCC 17023 / DSM 158 / JCM 6121 / CCUG 31486 / LMG 2827 / NBRC 12203 / NCIMB 8253 / ATH 2.4.1.) (Rhodobacter sphaeroides).